The following is a 115-amino-acid chain: T cell receptor beta variable 11-1 (115 aa).

An N-terminal signal peptide occupies residues 1–21 (MSTRLLCWMALCLLGAELSEA). Residues 22–115 (EVAQSPRYKI…SAMYLCASSL (94 aa)) enclose the Ig-like domain. Cys42 and Cys111 are disulfide-bonded.

Alpha-beta TR is a heterodimer composed of an alpha and beta chain; disulfide-linked. The alpha-beta TR is associated with the transmembrane signaling CD3 coreceptor proteins to form the TR-CD3 (TcR or TCR). The assembly of alpha-beta TR heterodimers with CD3 occurs in the endoplasmic reticulum where a single alpha-beta TR heterodimer associates with one CD3D-CD3E heterodimer, one CD3G-CD3E heterodimer and one CD247 homodimer forming a stable octameric structure. CD3D-CD3E and CD3G-CD3E heterodimers preferentially associate with TR alpha and TR beta chains, respectively. The association of the CD247 homodimer is the last step of TcR assembly in the endoplasmic reticulum and is required for transport to the cell surface.

The protein localises to the cell membrane. Functionally, v region of the variable domain of T cell receptor (TR) beta chain that participates in the antigen recognition. Alpha-beta T cell receptors are antigen specific receptors which are essential to the immune response and are present on the cell surface of T lymphocytes. Recognize peptide-major histocompatibility (MH) (pMH) complexes that are displayed by antigen presenting cells (APC), a prerequisite for efficient T cell adaptive immunity against pathogens. Binding of alpha-beta TR to pMH complex initiates TR-CD3 clustering on the cell surface and intracellular activation of LCK that phosphorylates the ITAM motifs of CD3G, CD3D, CD3E and CD247 enabling the recruitment of ZAP70. In turn ZAP70 phosphorylates LAT, which recruits numerous signaling molecules to form the LAT signalosome. The LAT signalosome propagates signal branching to three major signaling pathways, the calcium, the mitogen-activated protein kinase (MAPK) kinase and the nuclear factor NF-kappa-B (NF-kB) pathways, leading to the mobilization of transcription factors that are critical for gene expression and essential for T cell growth and differentiation. The T cell repertoire is generated in the thymus, by V-(D)-J rearrangement. This repertoire is then shaped by intrathymic selection events to generate a peripheral T cell pool of self-MH restricted, non-autoaggressive T cells. Post-thymic interaction of alpha-beta TR with the pMH complexes shapes TR structural and functional avidity. The chain is T cell receptor beta variable 11-1 from Homo sapiens (Human).